We begin with the raw amino-acid sequence, 278 residues long: Phosphonates import ATP-binding protein PhnC 2 (278 aa).

The ABC transporter domain maps to 5–253 (IRVDSLNKTF…FLNELYGAEG (249 aa)). 37–44 (GASGSGKS) lines the ATP pocket.

This sequence belongs to the ABC transporter superfamily. Phosphonates importer (TC 3.A.1.9.1) family. In terms of assembly, the complex is composed of two ATP-binding proteins (PhnC), two transmembrane proteins (PhnE) and a solute-binding protein (PhnD).

The protein localises to the cell inner membrane. It catalyses the reaction phosphonate(out) + ATP + H2O = phosphonate(in) + ADP + phosphate + H(+). In terms of biological role, part of the ABC transporter complex PhnCDE involved in phosphonates import. Responsible for energy coupling to the transport system. The polypeptide is Phosphonates import ATP-binding protein PhnC 2 (Pseudomonas aeruginosa (strain ATCC 15692 / DSM 22644 / CIP 104116 / JCM 14847 / LMG 12228 / 1C / PRS 101 / PAO1)).